A 77-amino-acid chain; its full sequence is U8-lycotoxin-Ls1l (77 aa).

The first 20 residues, 1-20, serve as a signal peptide directing secretion; the sequence is MKLMIFTGLVLFAIVSLIEA. Positions 21 to 26 are excised as a propeptide; sequence QAENEK.

This sequence belongs to the neurotoxin 19 (CSTX) family. 08 (U8-Lctx) subfamily. Post-translationally, contains 4 disulfide bonds. In terms of tissue distribution, expressed by the venom gland.

Its subcellular location is the secreted. The chain is U8-lycotoxin-Ls1l from Lycosa singoriensis (Wolf spider).